Consider the following 133-residue polypeptide: Succinate dehydrogenase assembly factor 3, mitochondrial (133 aa).

Residues 1–12 (MNNKLIYRSVRF) constitute a mitochondrion transit peptide.

The protein belongs to the complex I LYR family. SDHAF3 subfamily. In terms of assembly, interacts with SDH2 within an SDH1-SDH2 subcomplex.

Its subcellular location is the mitochondrion. It localises to the mitochondrion intermembrane space. The protein resides in the mitochondrion matrix. Functionally, plays an essential role in the assembly of succinate dehydrogenase (SDH), an enzyme complex (also referred to as respiratory complex II) that is a component of both the tricarboxylic acid (TCA) cycle and the mitochondrial electron transport chain, and which couples the oxidation of succinate to fumarate with the reduction of ubiquinone (coenzyme Q) to ubiquinol. Promotes maturation of the iron-sulfur protein subunit SDH2 of the SDH catalytic dimer, protecting it from the deleterious effects of oxidants. Acts together with SDHAF1 (SDH6). This Saccharomyces cerevisiae (strain ATCC 204508 / S288c) (Baker's yeast) protein is Succinate dehydrogenase assembly factor 3, mitochondrial.